A 277-amino-acid chain; its full sequence is Carbonyl reductase [NADPH] 1 (277 aa).

NADP(+)-binding positions include 10–34 (VTGSNKGIGLAIVRDLCRLFSGEVV), 63–64 (DI), and N90. The residue at position 30 (S30) is a Phosphoserine. Residues 95 to 97 (FKV) and Q106 each bind glutathione. A substrate-binding site is contributed by S140. 193-194 (AY) contacts glutathione. Y194 (proton acceptor) is an active-site residue. NADP(+) contacts are provided by residues 194 to 198 (YGVTK) and 231 to 233 (VRT).

Belongs to the short-chain dehydrogenases/reductases (SDR) family. As to quaternary structure, monomer.

The protein resides in the cytoplasm. The enzyme catalyses a secondary alcohol + NADP(+) = a ketone + NADPH + H(+). It catalyses the reaction prostaglandin F2alpha + NADP(+) = prostaglandin E2 + NADPH + H(+). The catalysed reaction is prostaglandin E1 + NADP(+) = 15-oxoprostaglandin E1 + NADPH + H(+). It carries out the reaction prostaglandin D2 + NADP(+) = 15-oxoprostaglandin D2 + NADPH + H(+). The enzyme catalyses menadione + NADPH + H(+) = menadiol + NADP(+). It catalyses the reaction prostaglandin E2 + NADP(+) = 15-oxoprostaglandin E2 + NADPH + H(+). The catalysed reaction is prostaglandin F2alpha + NADP(+) = 15-oxoprostaglandin F2alpha + NADPH + H(+). It carries out the reaction daunorubicin + NADPH + H(+) = 13-dihydrodaunorubicin + NADP(+). The enzyme catalyses S-nitrosoglutathione + NADPH + H(+) = S-(hydroxysulfenamide)glutathione + NADP(+). It catalyses the reaction a primary alcohol + NADP(+) = an aldehyde + NADPH + H(+). The catalysed reaction is cortisol + NADPH + H(+) = 20beta-dihydrocortisol + NADP(+). It carries out the reaction corticosterone + NADPH + H(+) = 20beta-dihydrocorticosterone + NADP(+). Functionally, NADPH-dependent reductase with broad substrate specificity. Catalyzes the reduction of a wide variety of carbonyl compounds including quinones, prostaglandins, menadione, plus various xenobiotics. Catalyzes the reduction of the antitumor anthracyclines doxorubicin and daunorubicin to the cardiotoxic compounds doxorubicinol and daunorubicinol. Can convert prostaglandin E to prostaglandin F2-alpha. Can bind glutathione, which explains its higher affinity for glutathione-conjugated substrates. Catalyzes the reduction of S-nitrosoglutathione. In addition, participates in the glucocorticoid metabolism by catalyzing the NADPH-dependent cortisol/corticosterone into 20beta-dihydrocortisol (20b-DHF) or 20beta-corticosterone (20b-DHB), which are weak agonists of NR3C1 and NR3C2 in adipose tissue. This Macaca fascicularis (Crab-eating macaque) protein is Carbonyl reductase [NADPH] 1.